The following is a 514-amino-acid chain: MARLALLSVSNKTGIIDLARSLVEEFDFDLISSGGTAQALKDAGLPVTKVADYTGSPEILGGRVKTLHPRIHGGILARRDVPQDITDLENNQIRPIDLVVVNLYPFEETIAKPGVTLLEAVEQIDIGGPAMLRASSKNFAHLAVLCDPAQYDEYLEELRQNNGVASLEFRQKAALKGFSHTASYDQAIAQALTCQFASYLADTQQYTLSGTQLQSLRYGENPHQPATWYQTGTTPTGWAAATKLQGKELSYNNLVDLEAARRIIAEFTDTPAATIIKHTNPCGTALGSSISEAYKKAFNADSTSAFGGIVALNRPIDAATASELTKTFLECVVAPSCEAEAQEILAKKSNVRVLTLADLSSGPKDTVKAIAGGFLVQTADDIVADTSQWQVVTERQPTDSELAELLFAWKVCKHVKSNAIVVTSDRTTLGVGAGQMNRVGSVKIALEQAGEKAKGAILASDGFFPFDDSVRTAAAAGITAIVQPGGSLRDKDSIKAANDLGLLMVLTGVRHFLH.

The MGS-like domain occupies 1–146 (MARLALLSVS…KNFAHLAVLC (146 aa)).

This sequence belongs to the PurH family.

It catalyses the reaction (6R)-10-formyltetrahydrofolate + 5-amino-1-(5-phospho-beta-D-ribosyl)imidazole-4-carboxamide = 5-formamido-1-(5-phospho-D-ribosyl)imidazole-4-carboxamide + (6S)-5,6,7,8-tetrahydrofolate. It carries out the reaction IMP + H2O = 5-formamido-1-(5-phospho-D-ribosyl)imidazole-4-carboxamide. Its pathway is purine metabolism; IMP biosynthesis via de novo pathway; 5-formamido-1-(5-phospho-D-ribosyl)imidazole-4-carboxamide from 5-amino-1-(5-phospho-D-ribosyl)imidazole-4-carboxamide (10-formyl THF route): step 1/1. The protein operates within purine metabolism; IMP biosynthesis via de novo pathway; IMP from 5-formamido-1-(5-phospho-D-ribosyl)imidazole-4-carboxamide: step 1/1. The sequence is that of Bifunctional purine biosynthesis protein PurH from Nostoc punctiforme (strain ATCC 29133 / PCC 73102).